Reading from the N-terminus, the 106-residue chain is UPF0145 protein Csac_0771 (106 aa).

This sequence belongs to the UPF0145 family.

This is UPF0145 protein Csac_0771 from Caldicellulosiruptor saccharolyticus (strain ATCC 43494 / DSM 8903 / Tp8T 6331).